The primary structure comprises 262 residues: Ornithine carbamoyltransferase (262 aa).

Carbamoyl phosphate-binding positions include Ser3–Arg7, Gln30, Arg54, and His81–Gln84. L-ornithine is bound by residues Asn114, Asp178, and Ser182–Met183. Carbamoyl phosphate contacts are provided by residues His219–Pro222 and Thr247.

The protein belongs to the aspartate/ornithine carbamoyltransferase superfamily. OTCase family.

It localises to the cytoplasm. It carries out the reaction carbamoyl phosphate + L-ornithine = L-citrulline + phosphate + H(+). It participates in amino-acid biosynthesis; L-arginine biosynthesis; L-arginine from L-ornithine and carbamoyl phosphate: step 1/3. Functionally, reversibly catalyzes the transfer of the carbamoyl group from carbamoyl phosphate (CP) to the N(epsilon) atom of ornithine (ORN) to produce L-citrulline. The protein is Ornithine carbamoyltransferase (argF) of Neisseria lactamica.